A 164-amino-acid chain; its full sequence is D-aminoacyl-tRNA deacylase (164 aa).

Residues Trp-72 and Phe-89 each coordinate tRNA. Catalysis depends on Thr-90, which acts as the Nucleophile. Residues 104 to 107 carry the C-terminal adenosine nucleotide of tRNA motif; it reads HLAK. The Gly-cisPro motif, allows the protein to recognize chirality of D-amino acids motif lies at 149–150; the sequence is GP.

Belongs to the DTD family. As to quaternary structure, homodimer.

Its subcellular location is the cytoplasm. It catalyses the reaction glycyl-tRNA(Ala) + H2O = tRNA(Ala) + glycine + H(+). The enzyme catalyses a D-aminoacyl-tRNA + H2O = a tRNA + a D-alpha-amino acid + H(+). It carries out the reaction D-tyrosyl-tRNA(Tyr) + H2O = D-tyrosine + tRNA(Tyr). Its function is as follows. D-aminoacyl-tRNA deacylase, with no observable activity on tRNAs charged with their cognate L-amino acid. Probably acts by rejecting L-amino acids from its binding site rather than specific recognition of D-amino acids. Catalyzes the hydrolysis of D-tyrosyl-tRNA(Tyr), has no activity on correctly charged L-tyrosyl-tRNA(Tyr). Hydrolyzes correctly charged, achiral, glycyl-tRNA(Gly). Deacylates mischarged D.melanogaster and E.coli glycyl-tRNA(Ala). Probably acts via tRNA-based rather than protein-based catalysis. Acts on tRNAs only when the D-amino acid is either attached to the ribose 3'-OH or transferred to the 3'-OH from the 2'-OH through rapid transesterification. Binds a number of other D-amino acids (D-Arg, D-Glu, D-His, D-Lys, D-Ser), suggesting it may also deacylate other mischarged tRNAs. This is D-aminoacyl-tRNA deacylase from Plasmodium falciparum (isolate 3D7).